Reading from the N-terminus, the 253-residue chain is Ribosomal RNA small subunit methyltransferase J (253 aa).

S-adenosyl-L-methionine-binding positions include 101-102, 117-118, and Asp169; these read RD and ER.

It belongs to the methyltransferase superfamily. RsmJ family.

Its subcellular location is the cytoplasm. It carries out the reaction guanosine(1516) in 16S rRNA + S-adenosyl-L-methionine = N(2)-methylguanosine(1516) in 16S rRNA + S-adenosyl-L-homocysteine + H(+). Specifically methylates the guanosine in position 1516 of 16S rRNA. The sequence is that of Ribosomal RNA small subunit methyltransferase J from Psychromonas ingrahamii (strain DSM 17664 / CCUG 51855 / 37).